The primary structure comprises 1402 residues: Erbin (1402 aa).

LRR repeat units lie at residues T23 to F44, T47 to C68, S70 to L91, N93 to C114, V116 to L137, N139 to T161, K162 to L183, Q185 to L206, G208 to L229, Q231 to C252, N254 to L275, N277 to L298, S300 to L321, N323 to W344, N346 to M367, K369 to Q391, and Q392 to T413. A phosphoserine mark is found at S440 and S444. Disordered stretches follow at residues D465–D489 and D507–S543. Positions E470–L480 are enriched in basic and acidic residues. Residue Y483 is modified to Phosphotyrosine. T485 is subject to Phosphothreonine. The segment covering D507–K534 has biased composition (basic and acidic residues). Residues S595, S599, S600, and S617 each carry the phosphoserine modification. Basic and acidic residues predominate over residues N629 to D638. Residues N629 to Q694 are disordered. A compositionally biased stretch (low complexity) spans N647–S659. The span at R660 to N689 shows a compositional bias: polar residues. S712, S849, S854, and S869 each carry phosphoserine. Positions E824–V864 are disordered. T914 carries the post-translational modification Phosphothreonine. A Phosphotyrosine modification is found at Y917. S928 carries the post-translational modification Phosphoserine. A Phosphotyrosine modification is found at Y970. Disordered regions lie at residues W990–S1018 and T1070–T1093. Positions T1070–V1084 are enriched in polar residues. Y1097 is subject to Phosphotyrosine. Disordered regions lie at residues G1107–D1187, A1198–D1217, and E1222–H1274. Composition is skewed to polar residues over residues G1128–P1139 and M1149–R1164. Phosphoserine occurs at positions 1150 and 1171. A phosphoserine mark is found at L1231, R1234, and S1276. In terms of domain architecture, PDZ spans E1311 to V1400.

Belongs to the LAP (LRR and PDZ) protein family. Interacts with ERBB2, BPAG1 and ITGB4. May favor the localization of ERBB2, by restricting its presence to the basolateral membrane of epithelial cells. Also found to interact with ARVCF and delta catenin. Interacts (via C-terminus) with DST (via N-terminus). Interacts with NOD2 (via CARD domain). Isoform 2 is phosphorylated on Ser-1231 and Ser-1234.

Its subcellular location is the cell junction. The protein localises to the hemidesmosome. The protein resides in the nucleus membrane. It localises to the basolateral cell membrane. Functionally, acts as an adapter for the receptor ERBB2, in epithelia. By binding the unphosphorylated ERBB2 'Tyr-1248' receptor, it may contribute to stabilize this unphosphorylated state. Inhibits NOD2-dependent NF-kappa-B signaling and pro-inflammatory cytokine secretion. In Mus musculus (Mouse), this protein is Erbin.